The sequence spans 958 residues: Nuclear factor NF-kappa-B p100 subunit (958 aa).

In terms of domain architecture, RHD spans 40-230 (LLMSYLSIIE…DPIHDSKSPG (191 aa)). The Nuclear localization signal motif lies at 343-347 (RKRRK). Disordered regions lie at residues 350 to 374 (PTFN…SFGQ) and 411 to 442 (CSAT…QTDS). A GRR region spans residues 352 to 390 (FNNHFYGGGSPMGGAPPGSSFGQGGGSNINYQYTGMNSA). Residues 357–374 (YGGGSPMGGAPPGSSFGQ) show a composition bias toward gly residues. The segment covering 412–425 (SATNSSEKNQQPSI) has biased composition (polar residues). 6 ANK repeats span residues 500–529 (NGDT…SIPN), 539–568 (LQQT…DPTI), 572–603 (YGNS…QKNL), 610–639 (HGLS…NVNS), 644–674 (SGKS…DINA), and 678–707 (GGNT…NVLS). The tract at residues 705-766 (VLSENDEPVN…SAEEMHRREQ (62 aa)) is disordered. Acidic residues predominate over residues 724 to 734 (SESDSDVQMDT). Residues 753 to 766 (ECEHSAEEMHRREQ) are compositionally biased toward basic and acidic residues. The Death domain occupies 815 to 901 (VNVLALETNT…EGVELLCKSE (87 aa)). Residues 904–916 (AKHHSPAESKNDS) are compositionally biased toward basic and acidic residues. Residues 904-958 (AKHHSPAESKNDSAYESQSMEVDQSSGNLMDDSQKQTIPVSAAELCPTTEPTIGQ) form a disordered region. Polar residues predominate over residues 917-931 (AYESQSMEVDQSSGN).

As to quaternary structure, active NF-kappa-B is a heterodimer of an about 52 kDa DNA-binding subunit and the weak DNA-binding subunit p65. Two heterodimers might form a labile tetramer. While translation occurs, the particular unfolded structure after the GRR repeat promotes the generation of p52 making it an acceptable substrate for the proteasome. This process is known as cotranslational processing. The processed form is active and the unprocessed form acts as an inhibitor (I kappa B-like), being able to form cytosolic complexes with NF-kappa B, trapping it in the cytoplasm. Complete folding of the region downstream of the GRR repeat precludes processing. Post-translationally, constitutive processing is tightly suppressed by its C-terminal processing inhibitory domain, named PID, which contains the death domain. Expressed in spleen.

It localises to the nucleus. It is found in the cytoplasm. In terms of biological role, appears to have dual functions such as cytoplasmic retention of attached NF-kappa-B proteins and generation of p52 by a cotranslational processing. The proteasome-mediated process ensures the production of both p52 and p100 and preserves their independent function. p52 binds to the kappa-B consensus sequence 5'-GGRNNYYCC-3', located in the enhancer region of genes involved in immune response and acute phase reactions. In concert with RELB, may play a role in the regulation of the circadian clock. The protein is Nuclear factor NF-kappa-B p100 subunit (nfkb2) of Xenopus laevis (African clawed frog).